We begin with the raw amino-acid sequence, 225 residues long: Cardiotrophin-like cytokine factor 1 (225 aa).

A signal peptide spans 1-27 (MDLRAGDSWGMLACLCTVLWHLPAVPA). Residue N29 is glycosylated (N-linked (GlcNAc...) asparagine).

The protein belongs to the IL-6 superfamily. As to quaternary structure, forms a heteromeric complex with cardiotrophin-like cytokine CRLF1/CLF-1; the CRLF1-CLCF1 complex is a ligand for the ciliary neurotrophic factor receptor/CNTFR. The CRLF1-CLCF1 heterodimer binds SORL1 (via N-terminal ectodomain); within this complex, the interaction is mediated predominantly by the CRLF1 moiety. The tripartite signaling complex formed by CRLF1, CLCF1 and CNTFR also binds SORL1.

The protein localises to the secreted. Functionally, in complex with CRLF1, forms a heterodimeric neurotropic cytokine that plays a crucial role during neuronal development. Also stimulates B-cells. Binds to and activates the ILST/gp130 receptor. The protein is Cardiotrophin-like cytokine factor 1 (Clcf1) of Mus musculus (Mouse).